The sequence spans 160 residues: Cytochrome b6-f complex subunit 4 (160 aa).

3 consecutive transmembrane segments (helical) span residues 36–56 (LLYV…GLAI), 95–115 (LLGV…PFIE), and 131–151 (TIFL…TMPI).

It belongs to the cytochrome b family. PetD subfamily. The 4 large subunits of the cytochrome b6-f complex are cytochrome b6, subunit IV (17 kDa polypeptide, petD), cytochrome f and the Rieske protein, while the 4 small subunits are petG, petL, petM and petN. The complex functions as a dimer.

It localises to the plastid. The protein localises to the chloroplast thylakoid membrane. Its function is as follows. Component of the cytochrome b6-f complex, which mediates electron transfer between photosystem II (PSII) and photosystem I (PSI), cyclic electron flow around PSI, and state transitions. This is Cytochrome b6-f complex subunit 4 from Porphyra purpurea (Red seaweed).